The chain runs to 331 residues: Adenosine deaminase (331 aa).

Zn(2+) is bound by residues His12 and His14. His14, Asp16, and Gly170 together coordinate substrate. Residue His197 participates in Zn(2+) binding. The Proton donor role is filled by Glu200. Asp278 lines the Zn(2+) pocket. A substrate-binding site is contributed by Asp279.

The protein belongs to the metallo-dependent hydrolases superfamily. Adenosine and AMP deaminases family. Adenosine deaminase subfamily. Zn(2+) serves as cofactor.

The enzyme catalyses adenosine + H2O + H(+) = inosine + NH4(+). It catalyses the reaction 2'-deoxyadenosine + H2O + H(+) = 2'-deoxyinosine + NH4(+). Its function is as follows. Catalyzes the hydrolytic deamination of adenosine and 2-deoxyadenosine. This is Adenosine deaminase from Shewanella baltica (strain OS185).